Reading from the N-terminus, the 81-residue chain is Large ribosomal subunit protein bL31B (81 aa).

This sequence belongs to the bacterial ribosomal protein bL31 family. Type B subfamily. Part of the 50S ribosomal subunit.

This Borreliella afzelii (strain PKo) (Borrelia afzelii) protein is Large ribosomal subunit protein bL31B.